Reading from the N-terminus, the 93-residue chain is U12-lycotoxin-Ls1d (93 aa).

Residues 1–18 (MKFAVILLFSLVVLAVAS) form the signal peptide. A propeptide spanning residues 19–38 (ESVEEVRREIDIEDLPEQQR) is cleaved from the precursor.

This sequence belongs to the neurotoxin 31 family. Contains 5 disulfide bonds. Expressed by the venom gland.

Its subcellular location is the secreted. This is U12-lycotoxin-Ls1d from Lycosa singoriensis (Wolf spider).